A 482-amino-acid chain; its full sequence is tRNA sulfurtransferase (482 aa).

The THUMP domain maps to 61–165 (LAIRDALTRI…DDRLLLIKGR (105 aa)). ATP is bound by residues 183–184 (LI), K265, G287, and Q296. An intrachain disulfide couples C344 to C456. The Rhodanese domain maps to 404–482 (FGPNDVILDI…GFNNVKVYRP (79 aa)). C456 serves as the catalytic Cysteine persulfide intermediate.

The protein belongs to the ThiI family.

It is found in the cytoplasm. It catalyses the reaction [ThiI sulfur-carrier protein]-S-sulfanyl-L-cysteine + a uridine in tRNA + 2 reduced [2Fe-2S]-[ferredoxin] + ATP + H(+) = [ThiI sulfur-carrier protein]-L-cysteine + a 4-thiouridine in tRNA + 2 oxidized [2Fe-2S]-[ferredoxin] + AMP + diphosphate. It carries out the reaction [ThiS sulfur-carrier protein]-C-terminal Gly-Gly-AMP + S-sulfanyl-L-cysteinyl-[cysteine desulfurase] + AH2 = [ThiS sulfur-carrier protein]-C-terminal-Gly-aminoethanethioate + L-cysteinyl-[cysteine desulfurase] + A + AMP + 2 H(+). It functions in the pathway cofactor biosynthesis; thiamine diphosphate biosynthesis. Functionally, catalyzes the ATP-dependent transfer of a sulfur to tRNA to produce 4-thiouridine in position 8 of tRNAs, which functions as a near-UV photosensor. Also catalyzes the transfer of sulfur to the sulfur carrier protein ThiS, forming ThiS-thiocarboxylate. This is a step in the synthesis of thiazole, in the thiamine biosynthesis pathway. The sulfur is donated as persulfide by IscS. In Shigella boydii serotype 4 (strain Sb227), this protein is tRNA sulfurtransferase.